Consider the following 190-residue polypeptide: MNMSATLILAFGMSMDAFAASIGKGAVLHNPRFRDAIRTGLIFGVIEAITPLIGWALGFFASQYILEWDHWVAFTLLLILGGRMVVEGFKGSSDCRCEKVKNHSLALLVCTAIATSLDAMAIGVGLAFLQVNILHTAMVIGCATMIMVTLGMMIGRYIGPILGKKAEVMGGLVLIGIGCNILYEHLGYAA.

Helical transmembrane passes span 3-23 (MSAT…ASIG), 41-61 (LIFG…GFFA), 62-82 (SQYI…ILGG), 105-127 (LALL…VGLA), 143-163 (ATMI…PILG), and 168-188 (VMGG…HLGY).

The protein belongs to the MntP (TC 9.B.29) family.

The protein localises to the cell inner membrane. Its function is as follows. Probably functions as a manganese efflux pump. This Pectobacterium carotovorum subsp. carotovorum (strain PC1) protein is Putative manganese efflux pump MntP.